The chain runs to 339 residues: Heat-inducible transcription repressor HrcA (339 aa).

It belongs to the HrcA family.

In terms of biological role, negative regulator of class I heat shock genes (grpE-dnaK-dnaJ and groELS operons). Prevents heat-shock induction of these operons. The chain is Heat-inducible transcription repressor HrcA from Acidothermus cellulolyticus (strain ATCC 43068 / DSM 8971 / 11B).